The following is a 60-amino-acid chain: Large ribosomal subunit protein bL32 (60 aa).

Positions 1–60 (MAVQQVKKSRSKRDIRRSHDSLTNPTLSTDKSTGELHLRHHVSPNGFYKGRKVVDTKSED) are disordered. Residues 7 to 16 (KKSRSKRDIR) are compositionally biased toward basic residues. Positions 22-31 (LTNPTLSTDK) are enriched in polar residues.

Belongs to the bacterial ribosomal protein bL32 family.

This Francisella tularensis subsp. tularensis (strain SCHU S4 / Schu 4) protein is Large ribosomal subunit protein bL32.